Here is a 64-residue protein sequence, read N- to C-terminus: Large ribosomal subunit protein uL30 (64 aa).

The protein belongs to the universal ribosomal protein uL30 family. In terms of assembly, part of the 50S ribosomal subunit.

The sequence is that of Large ribosomal subunit protein uL30 from Syntrophus aciditrophicus (strain SB).